The primary structure comprises 672 residues: Zinc finger protein 271 (672 aa).

A disordered region spans residues M1–S29. Over residues S9–T22 the composition is skewed to basic and acidic residues. The C2H2-type 1; degenerate zinc-finger motif lies at H80–H102. 19 consecutive C2H2-type zinc fingers follow at residues Y107–H129, Y135–H157, Y163–H185, Y191–H213, Y219–H241, Y247–H269, Y275–H297, Y303–H325, Y331–H353, Y359–H381, Y387–H409, Y415–H437, Y443–H465, Y471–H493, Y499–H521, Y527–H549, N555–H577, Y583–H605, and Y611–H633.

This sequence belongs to the krueppel C2H2-type zinc-finger protein family.

The protein resides in the nucleus. In terms of biological role, may be involved in transcriptional regulation. This chain is Zinc finger protein 271 (ZNF271), found in Pongo abelii (Sumatran orangutan).